A 109-amino-acid polypeptide reads, in one-letter code: Spermidine export protein MdtI (109 aa).

4 helical membrane passes run 6 to 26, 36 to 56, 64 to 84, and 88 to 108; these read WIHA…NVFL, VYGI…SQAV, AYAL…WVLF, and LNNK…LIKL.

This sequence belongs to the drug/metabolite transporter (DMT) superfamily. Small multidrug resistance (SMR) (TC 2.A.7.1) family. MdtI subfamily. As to quaternary structure, forms a complex with MdtJ.

The protein localises to the cell inner membrane. Its function is as follows. Catalyzes the excretion of spermidine. The sequence is that of Spermidine export protein MdtI from Klebsiella pneumoniae (strain 342).